The primary structure comprises 294 residues: Porphobilinogen deaminase (294 aa).

Cysteine 232 bears the S-(dipyrrolylmethanemethyl)cysteine mark.

This sequence belongs to the HMBS family. In terms of assembly, monomer. It depends on dipyrromethane as a cofactor.

The enzyme catalyses 4 porphobilinogen + H2O = hydroxymethylbilane + 4 NH4(+). It participates in porphyrin-containing compound metabolism; protoporphyrin-IX biosynthesis; coproporphyrinogen-III from 5-aminolevulinate: step 2/4. Tetrapolymerization of the monopyrrole PBG into the hydroxymethylbilane pre-uroporphyrinogen in several discrete steps. The sequence is that of Porphobilinogen deaminase from Corynebacterium diphtheriae (strain ATCC 700971 / NCTC 13129 / Biotype gravis).